Reading from the N-terminus, the 442-residue chain is Protein IQ-DOMAIN 33 (442 aa).

In terms of domain architecture, IQ spans 159-188 (EEDAAVIIQSAFRSYLAIRRSKEEEETFAK). The interval 184 to 212 (ETFAKEESFSGEESQDNASMGTSLEAQTG) is disordered. Residues 199 to 212 (DNASMGTSLEAQTG) show a composition bias toward polar residues. Residues 270-282 (RERALAYAFSQQL) form a calmodulin-binding region. Residues 375–442 (EKSSFKPSIS…ETSHKLNSST (68 aa)) are disordered. Basic residues predominate over residues 383-402 (ISKRKSVPSYKSQRKHHKLQ). Positions 385 to 392 (KRKSVPSY) match the Nuclear localization signal motif.

The protein belongs to the IQD family. In terms of assembly, binds to multiple calmodulin (CaM) in the presence of Ca(2+) and CaM-like proteins.

The protein resides in the nucleus. Its function is as follows. May be involved in cooperative interactions with calmodulins or calmodulin-like proteins. Recruits calmodulin proteins to microtubules, thus being a potential scaffold in cellular signaling and trafficking. May associate with nucleic acids and regulate gene expression at the transcriptional or post-transcriptional level. In Arabidopsis thaliana (Mouse-ear cress), this protein is Protein IQ-DOMAIN 33.